A 205-amino-acid chain; its full sequence is High frequency lysogenization protein HflD homolog (205 aa).

It belongs to the HflD family.

The protein localises to the cytoplasm. Its subcellular location is the cell inner membrane. The polypeptide is High frequency lysogenization protein HflD homolog (Hahella chejuensis (strain KCTC 2396)).